Reading from the N-terminus, the 119-residue chain is Large ribosomal subunit protein bL20 (119 aa).

The protein belongs to the bacterial ribosomal protein bL20 family.

Functionally, binds directly to 23S ribosomal RNA and is necessary for the in vitro assembly process of the 50S ribosomal subunit. It is not involved in the protein synthesizing functions of that subunit. The chain is Large ribosomal subunit protein bL20 from Shouchella clausii (strain KSM-K16) (Alkalihalobacillus clausii).